The chain runs to 177 residues: Endothelin-2 (177 aa).

A signal peptide spans 1 to 23 (MPTALCSIALALLVALHEGKSQA). Residues 24 to 45 (ATTPIPEQPAPLPRARGSHLRT) constitute a propeptide that is removed on maturation. Disulfide bonds link Cys-48/Cys-62 and Cys-50/Cys-58. The propeptide occupies 69 to 177 (VNTPGQTAPY…RPTHSRQRKR (109 aa)). Positions 95-110 (CECYSARDPACATFCH) are endothelin-like. Residues 155–177 (HFARQQQKPTRETRPTHSRQRKR) form a disordered region.

It belongs to the endothelin/sarafotoxin family. As to expression, expressed in various organs including heart, lung, liver, kidney, gastrointestinal tract, uterus and ovary, but not in spleen. Within the gastrointestinal tract, gene expression was detected in rumen, a ruminant-specific digestive organ, as well as stomach, duodenum and colon.

The protein localises to the secreted. Its function is as follows. Endothelins are endothelium-derived vasoconstrictor peptides. This Bos taurus (Bovine) protein is Endothelin-2 (EDN2).